A 156-amino-acid polypeptide reads, in one-letter code: Small ribosomal subunit protein uS7 (156 aa).

This sequence belongs to the universal ribosomal protein uS7 family. Part of the 30S ribosomal subunit. Contacts proteins S9 and S11.

In terms of biological role, one of the primary rRNA binding proteins, it binds directly to 16S rRNA where it nucleates assembly of the head domain of the 30S subunit. Is located at the subunit interface close to the decoding center, probably blocks exit of the E-site tRNA. This chain is Small ribosomal subunit protein uS7, found in Pelotomaculum thermopropionicum (strain DSM 13744 / JCM 10971 / SI).